The sequence spans 219 residues: ATP phosphoribosyltransferase (219 aa).

The protein belongs to the ATP phosphoribosyltransferase family. Short subfamily. As to quaternary structure, heteromultimer composed of HisG and HisZ subunits.

The protein resides in the cytoplasm. The catalysed reaction is 1-(5-phospho-beta-D-ribosyl)-ATP + diphosphate = 5-phospho-alpha-D-ribose 1-diphosphate + ATP. The protein operates within amino-acid biosynthesis; L-histidine biosynthesis; L-histidine from 5-phospho-alpha-D-ribose 1-diphosphate: step 1/9. Catalyzes the condensation of ATP and 5-phosphoribose 1-diphosphate to form N'-(5'-phosphoribosyl)-ATP (PR-ATP). Has a crucial role in the pathway because the rate of histidine biosynthesis seems to be controlled primarily by regulation of HisG enzymatic activity. This chain is ATP phosphoribosyltransferase, found in Syntrophotalea carbinolica (strain DSM 2380 / NBRC 103641 / GraBd1) (Pelobacter carbinolicus).